Consider the following 364-residue polypeptide: uncharacterized protein (364 aa).

A run of 3 helical transmembrane segments spans residues 41 to 61 (NIFT…FFGL), 298 to 318 (VIYI…ITYM), and 329 to 349 (LLFY…SIII).

It localises to the membrane. This is an uncharacterized protein from Mycoplasma capricolum subsp. capricolum (strain California kid / ATCC 27343 / NCTC 10154).